A 529-amino-acid polypeptide reads, in one-letter code: Hyaluronidase PH-20 (529 aa).

The first 35 residues, 1–35 (MGAFTFKHSFFGSFVECSGVLQTVFIFLLIPCCLA), serve as a signal peptide directing secretion. 2 cysteine pairs are disulfide-bonded: Cys-59–Cys-351 and Cys-223–Cys-237. A glycan (N-linked (GlcNAc...) asparagine) is linked at Asn-81. The active-site Proton donor is Glu-147. N-linked (GlcNAc...) asparagine glycans are attached at residues Asn-165 and Asn-179. N-linked (GlcNAc...) asparagine glycosylation is found at Asn-253 and Asn-368. 3 disulfides stabilise this stretch: Cys-376–Cys-387, Cys-381–Cys-435, and Cys-437–Cys-464. Asn-401 carries an N-linked (GlcNAc...) asparagine glycan. The disordered stretch occupies residues 478 to 502 (DEPPITDDTSQNQDSISDITSSAPP). Polar residues predominate over residues 487-502 (SQNQDSISDITSSAPP). Ser-492 carries GPI-anchor amidated serine lipidation. Positions 493–529 (ISDITSSAPPSSHILPKDLSWCLFLLSIFSQHWKYLL) are cleaved as a propeptide — removed in mature form.

It belongs to the glycosyl hydrolase 56 family. Post-translationally, endoproteolysis (toward the C-terminus producing two disulfide-linked fragments) could activate PH-20. As to expression, testis.

The protein resides in the cell membrane. The catalysed reaction is Random hydrolysis of (1-&gt;4)-linkages between N-acetyl-beta-D-glucosamine and D-glucuronate residues in hyaluronate.. In terms of biological role, involved in sperm-egg adhesion. Upon fertilization sperm must first penetrate a layer of cumulus cells that surrounds the egg before reaching the zona pellucida. The cumulus cells are embedded in a matrix containing hyaluronic acid which is formed prior to ovulation. This protein aids in penetrating the layer of cumulus cells by digesting hyaluronic acid. The chain is Hyaluronidase PH-20 (SPAM1) from Cavia porcellus (Guinea pig).